Here is a 135-residue protein sequence, read N- to C-terminus: Mediator of RNA polymerase II transcription subunit 10 (135 aa).

It belongs to the Mediator complex subunit 10 family. As to quaternary structure, component of the Mediator complex, which is composed of MED1, MED4, MED6, MED7, MED8, MED9, MED10, MED11, MED12, MED13, MED13L, MED14, MED15, MED16, MED17, MED18, MED19, MED20, MED21, MED22, MED23, MED24, MED25, MED26, MED27, MED29, MED30, MED31, CCNC, CDK8 and CDC2L6/CDK11. The MED12, MED13, CCNC and CDK8 subunits form a distinct module termed the CDK8 module. Mediator containing the CDK8 module is less active than Mediator lacking this module in supporting transcriptional activation. Individual preparations of the Mediator complex lacking one or more distinct subunits have been variously termed ARC, CRSP, DRIP, PC2, SMCC and TRAP.

It is found in the nucleus. In terms of biological role, component of the Mediator complex, a coactivator involved in the regulated transcription of nearly all RNA polymerase II-dependent genes. Mediator functions as a bridge to convey information from gene-specific regulatory proteins to the basal RNA polymerase II transcription machinery. Mediator is recruited to promoters by direct interactions with regulatory proteins and serves as a scaffold for the assembly of a functional preinitiation complex with RNA polymerase II and the general transcription factors. This is Mediator of RNA polymerase II transcription subunit 10 (MED10) from Macaca fascicularis (Crab-eating macaque).